The primary structure comprises 222 residues: Pectate lyase A (222 aa).

The N-terminal stretch at Met1–Ala26 is a signal peptide.

Belongs to the polysaccharide lyase 3 family. It depends on Ca(2+) as a cofactor.

It localises to the secreted. The enzyme catalyses Eliminative cleavage of (1-&gt;4)-alpha-D-galacturonan to give oligosaccharides with 4-deoxy-alpha-D-galact-4-enuronosyl groups at their non-reducing ends.. The catalysed reaction is Eliminative cleavage of (1-&gt;4)-alpha-D-galacturonan methyl ester to give oligosaccharides with 4-deoxy-6-O-methyl-alpha-D-galact-4-enuronosyl groups at their non-reducing ends.. It participates in glycan metabolism; pectin degradation. In terms of biological role, catalyzes the depolymerization of both polygalacturonate and pectins with low (20-34%) and high (90%) levels of methyl esterification, with an endo mode of action. In contrast to the majority of pectate lyases, displays high activity on highly methylated pectins. Does not show xylanase and cellulase activity. This Paenibacillus amylolyticus protein is Pectate lyase A.